Consider the following 125-residue polypeptide: Small ribosomal subunit protein uS12 (125 aa).

Positions 1–23 are disordered; it reads MATVNQLVRKGRTKRTAKSSVPA. Residue Asp-89 is modified to 3-methylthioaspartic acid. Positions 102 to 125 are disordered; it reads ADTAGVDKRRQGRSKYGAKRPKKK. Residues 111–125 show a composition bias toward basic residues; the sequence is RQGRSKYGAKRPKKK.

This sequence belongs to the universal ribosomal protein uS12 family. As to quaternary structure, part of the 30S ribosomal subunit. Contacts proteins S8 and S17. May interact with IF1 in the 30S initiation complex.

Its function is as follows. With S4 and S5 plays an important role in translational accuracy. Functionally, interacts with and stabilizes bases of the 16S rRNA that are involved in tRNA selection in the A site and with the mRNA backbone. Located at the interface of the 30S and 50S subunits, it traverses the body of the 30S subunit contacting proteins on the other side and probably holding the rRNA structure together. The combined cluster of proteins S8, S12 and S17 appears to hold together the shoulder and platform of the 30S subunit. This Halorhodospira halophila (strain DSM 244 / SL1) (Ectothiorhodospira halophila (strain DSM 244 / SL1)) protein is Small ribosomal subunit protein uS12.